Here is a 164-residue protein sequence, read N- to C-terminus: MKCKPNQTRTYDPEGFKKRAACLCFRSEREDEVLLVSSSRYPDRWIVPGGGMEPEEEPGGAAVREVYEEAGVKGKLGRLLGVFEQNQDPKHRTYVYVLTVTELLEDWEDSVSIGRKREWFKVEDAIKVLQCHKPVHAEYLEKLKLGGSPTNGNSMAPSSPDSDP.

Substrate contacts are provided by residues Arg9, 17–19, and 38–40; these read KKR and SSR. Residues 17 to 144 form the Nudix hydrolase domain; the sequence is KKRAACLCFR…VHAEYLEKLK (128 aa). Mg(2+)-binding residues include Gly49 and Glu65. The short motif at 50 to 71 is the Nudix box element; that stretch reads GGMEPEEEPGGAAVREVYEEAG. The active-site Proton acceptor is Glu68. Mg(2+) is bound at residue Glu69. Substrate contacts are provided by residues 89–91, Arg115, and Lys133; that span reads PKH. Residues 144–164 are disordered; it reads KLGGSPTNGNSMAPSSPDSDP. A compositionally biased stretch (polar residues) spans 148–164; it reads SPTNGNSMAPSSPDSDP.

Belongs to the Nudix hydrolase family. DIPP subfamily. Requires Mg(2+) as cofactor. The cofactor is Mn(2+). Mainly expressed in testis and, at lower level in brain. According to PubMed:12121577, it is widely expressed.

Its subcellular location is the cytoplasm. It catalyses the reaction diphospho-myo-inositol polyphosphate + H2O = myo-inositol polyphosphate + phosphate.. It carries out the reaction P(1),P(6)-bis(5'-adenosyl) hexaphosphate + H2O = adenosine 5'-pentaphosphate + AMP + 2 H(+). The enzyme catalyses P(1),P(5)-bis(5'-adenosyl) pentaphosphate + H2O = adenosine 5'-tetraphosphate + AMP + 2 H(+). Cleaves a beta-phosphate from the diphosphate groups in PP-InsP5 (diphosphoinositol pentakisphosphate), suggesting that it may play a role in signal transduction. Also able to catalyze the hydrolysis of dinucleoside oligophosphates, with Ap6A and Ap5A being the preferred substrates. The major reaction products are ADP and p4a from Ap6A and ADP and ATP from Ap5A. Also able to hydrolyze 5-phosphoribose 1-diphosphate. This is Diphosphoinositol polyphosphate phosphohydrolase 3-alpha (NUDT10) from Homo sapiens (Human).